A 285-amino-acid polypeptide reads, in one-letter code: Tropomyosin alpha-3 chain (285 aa).

Residues 1-285 (MMEAIKKKMQ…DHALNDMTSI (285 aa)) are a coiled coil. Met-2 is subject to N-acetylmethionine. Met-2 carries the post-translational modification N-acetylalanine. The segment covering 16–41 (KENALDRAEQAEAEQKQAEERSKQLE) has biased composition (basic and acidic residues). A disordered region spans residues 16–44 (KENALDRAEQAEAEQKQAEERSKQLEDEL). Thr-54 is modified (phosphothreonine). Ser-62 and Ser-88 each carry phosphoserine. Phosphothreonine is present on Thr-109. Glu-125 and Leu-177 each carry N6-acetyllysine. Position 207 is a phosphoserine (Ser-207). Tyr-215 is subject to N6-acetyllysine. Ser-216 is subject to Phosphoserine. At Thr-253 the chain carries Phosphothreonine. Tyr-262 is subject to Phosphotyrosine. Ser-272 bears the Phosphoserine mark. Thr-283 carries the post-translational modification Phosphothreonine. Position 284 is a phosphoserine (Ser-284).

This sequence belongs to the tropomyosin family. As to quaternary structure, homodimer. Heterodimer of an alpha (TPM1, TPM3 or TPM4) and a beta (TPM2) chain. Interacts with TMOD1. Interacts with TNNT1.

It localises to the cytoplasm. It is found in the cytoskeleton. Its function is as follows. Binds to actin filaments in muscle and non-muscle cells. Plays a central role, in association with the troponin complex, in the calcium dependent regulation of vertebrate striated muscle contraction. Smooth muscle contraction is regulated by interaction with caldesmon. In non-muscle cells is implicated in stabilizing cytoskeleton actin filaments. The sequence is that of Tropomyosin alpha-3 chain (TPM3) from Homo sapiens (Human).